Reading from the N-terminus, the 622-residue chain is Telomerase-associated protein of 75 kDa (622 aa).

Component of the telomerase holoenzyme complex, composed of the catalytic core (the catalytic subunit TERT, the telomerase RNA template component TER and TAP65/p65), which is associated with two heterotrimeric subcomplexes: (i) the replication protein A (RPA)-related subcomplex, composed of TEB1, RPA2/TEB2 and RPA3/TEB3 and (ii) the CST-like subcomplex, composed of TAP75/p75, TAP45/p45 and TAP19/p19. TEB1 and the CST-like subcomplex are tethered to the catalytic core by TAP50/p50.

The protein localises to the chromosome. It is found in the telomere. In terms of biological role, component of a CST-like subcomplex of the holoenzyme telomerase ribonucleoprotein complex, which stimulates telomerase complementary-strand synthesis. Telomerase is an essential ribonucleoprotein enzyme that copies new telomeric repeats onto chromosome ends by repetitively synthesizing the short telomere-repeat sequence 5'-TTGGGG-3' using an RNA template component TER. The CST-like subcomplex (also named 7-4-1) binds telomeric single-stranded DNA and coordinates telomere G-strand and C-strand synthesis. The chain is Telomerase-associated protein of 75 kDa from Tetrahymena thermophila (strain SB210).